A 476-amino-acid chain; its full sequence is MVGTMWKVIVSLVLLMPGSCDGLFRSLYRSVSMPPKGDSGQPLFLTPYIEAGKIQKGRELSLVSPFLGLNMRSYAGFLTVNKTYNSNLFFWFFPAQIQPEDAPVVLWLQGGPGFSSMFGLFVEHGPYVVTSNMTLRDRDFPWTTTLSMLYIDNPVGTGFSFTDDTHGYAVNEDDVAQDLYSALIQFFQIFPEYKNNDFYVTGESYAGKYVPAIAHLIHSLNPVREVKINLKGIAIGDGYSDPESIIGGYAEFLYQIGLLDEKQKKYFQKQCHECIEHIRKQNWFQAFEILDKLLDGDLTSDPSYFQNVTGCSNYCNFLRCTEPEDQLYYAKFLSLPEVRQAIHVGNRTFNDGTTVEKYLREDTVQSVKPWLTEIMNNYKVLIYNGQLDIIVAAALTEHSLMGMDWKGSQEYKKAEKKVWKIFKSDSEVAGYVRQVGDFHQVIIRGGGHILPYIQPLRAFDMINRFIYGKGWDPYVG.

Residues 1–22 (MVGTMWKVIVSLVLLMPGSCDG) form the signal peptide. N-linked (GlcNAc...) asparagine glycans are attached at residues N81 and N132. Residue S204 is part of the active site. N307 and N346 each carry an N-linked (GlcNAc...) asparagine glycan. Active-site residues include D388 and H448.

Belongs to the peptidase S10 family.

May be involved in the digestion of phagocytosed particles in the lysosome, participation in an inflammatory protease cascade, and trimming of peptides for antigen presentation. In Pongo abelii (Sumatran orangutan), this protein is Probable serine carboxypeptidase CPVL (CPVL).